The chain runs to 835 residues: MAAPILKDVVAYVEVWSSNGTENYSKTFTTQLVDMGAKVSKTFNKQVTHVIFKDGYQSTWDKAQKRGVKLVSVLWVEKCRTAGAHIDESLFPAANTNEHLPSLIKKKRKCMQPKDFNFKTPENDKRFQKKFEKMAKELQRQKTSLDDDVPILLFESNGSLIYTPTIEINSSHHSAMEKRLQEMKEKRENLSPTSSQLIQQSHDNPSNSLCEAPLNISRDTLCSDEYFAGGLHSSFDDLCGNSGCGNQERKLEGSINDIKSDVCISSLVSKANNIHSSPSFTHLDKSSPQKFLSNLSKEEINLQRNIAGKIVTPDQKQAAGMSQETFEEKYRLSPTLSSIKGHLLIHSRPRSSSVKRKRVSHGSHSPPKEKCKRKRSIRRSIMPRLQLCRSEGRLQHVAGPALKALSCGESSYDDYFSPDNLKERNSENLPPESQLPSSPAQFSCRSLSKKERTSIFEMSDFSCVGKKTRTVDITNFTAKTISSPQKTGNGEGRATSSCVTSAPEEALRCCRQAGKEDGCPEGNGFSYTIEDPALPKGHDGDLTALEGSLEEMKEAVGLKSTQNRGTTSKISNSSEGEAQSEHEPCFIVDCNMETSTEEKENLPGGYSGSVKNRPTRHDVLDDSCDGFKDLIKPHEEMKKSGRGKKPTRTLVMTSMPSEKQNVVIQVVDKLKGFSIAPDVCETTTHVLSGKPLRTLNVLLGIARGCWVLSYDWVLWSLELGHWISEEPFELSHHFPAAPLCRSECHLSAGPYRGTLFADQPVMFVSPASSPPVAKLCELVHLCGGRVSQVPRQASIVIGPYSGKKKATVKYLSEKWVLDSITQHKVCASENYLLSQ.

Residues 1 to 93 (MAAPILKDVV…AHIDESLFPA (93 aa)) enclose the BRCT 1 domain. Residues 184-206 (KEKRENLSPTSSQLIQQSHDNPS) form a disordered region. Residues 190–206 (LSPTSSQLIQQSHDNPS) are compositionally biased toward polar residues. Residues S279, S287, S296, and S333 each carry the phosphoserine modification. T335 is modified (phosphothreonine). Positions 346–361 (HSRPRSSSVKRKRVSH) are enriched in basic residues. Disordered stretches follow at residues 346–376 (HSRP…RKRS) and 418–442 (PDNL…PAQF). Position 548 is a phosphoserine (S548). The interval 557–582 (GLKSTQNRGTTSKISNSSEGEAQSEH) is disordered. Residues 559–577 (KSTQNRGTTSKISNSSEGE) show a composition bias toward polar residues. BRCT domains follow at residues 640–730 (SGRG…PFEL) and 751–833 (YRGT…NYLL).

In terms of assembly, interacts with CDC27 and maybe other components of the APC/C complex. Interacts with histone variant H2AX under DNA damage conditions.

It localises to the cytoplasm. The protein localises to the cytoskeleton. Its subcellular location is the microtubule organizing center. The protein resides in the centrosome. Functionally, implicated in chromosome condensation and DNA damage induced cellular responses. May play a role in neurogenesis and regulation of the size of the cerebral cortex. The polypeptide is Microcephalin (Gorilla gorilla gorilla (Western lowland gorilla)).